The sequence spans 286 residues: Probable sulfate transport system permease protein cysT (286 aa).

The next 7 helical transmembrane spans lie at 27 to 47 (PWQL…IALL), 77 to 97 (TALF…WVLV), 106 to 126 (IIDA…GLTL), 147 to 167 (VAFT…PFVV), 196 to 216 (FWRV…ALAF), 225 to 245 (SVVI…VLIF), and 257 to 277 (TIIG…INFI). In terms of domain architecture, ABC transmembrane type-1 spans 71–272 (YVVTLMTALF…ILSISLFLLF (202 aa)).

This sequence belongs to the binding-protein-dependent transport system permease family. CysTW subfamily.

The protein localises to the plastid. It is found in the chloroplast membrane. Part of the ABC transporter complex cysAWTP (TC 3.A.1.6.1) involved in sulfate/thiosulfate import. Probably responsible for the translocation of the substrate across the membrane. The polypeptide is Probable sulfate transport system permease protein cysT (cysT) (Chlorokybus atmophyticus (Soil alga)).